An 890-amino-acid polypeptide reads, in one-letter code: Alanine--tRNA ligase (890 aa).

4 residues coordinate Zn(2+): His-578, His-582, Cys-689, and His-693.

Belongs to the class-II aminoacyl-tRNA synthetase family. The cofactor is Zn(2+).

It is found in the cytoplasm. It carries out the reaction tRNA(Ala) + L-alanine + ATP = L-alanyl-tRNA(Ala) + AMP + diphosphate. In terms of biological role, catalyzes the attachment of alanine to tRNA(Ala) in a two-step reaction: alanine is first activated by ATP to form Ala-AMP and then transferred to the acceptor end of tRNA(Ala). Also edits incorrectly charged Ser-tRNA(Ala) and Gly-tRNA(Ala) via its editing domain. The protein is Alanine--tRNA ligase of Deinococcus radiodurans (strain ATCC 13939 / DSM 20539 / JCM 16871 / CCUG 27074 / LMG 4051 / NBRC 15346 / NCIMB 9279 / VKM B-1422 / R1).